Reading from the N-terminus, the 184-residue chain is Protein Syd (184 aa).

It belongs to the Syd family.

The protein resides in the cell inner membrane. In terms of biological role, interacts with the SecY protein in vivo. May bind preferentially to an uncomplexed state of SecY, thus functioning either as a chelating agent for excess SecY in the cell or as a regulatory factor that negatively controls the translocase function. The polypeptide is Protein Syd (Photobacterium profundum (strain SS9)).